The chain runs to 879 residues: DNA mismatch repair protein MutS (879 aa).

629 to 636 is a binding site for ATP; sequence GPNMAGKS.

Belongs to the DNA mismatch repair MutS family.

Its function is as follows. This protein is involved in the repair of mismatches in DNA. It is possible that it carries out the mismatch recognition step. This protein has a weak ATPase activity. The polypeptide is DNA mismatch repair protein MutS (Ruegeria sp. (strain TM1040) (Silicibacter sp.)).